A 319-amino-acid polypeptide reads, in one-letter code: Protein-methionine-sulfoxide reductase catalytic subunit MsrP (319 aa).

Residues 1–54 (MSSFKPSRFSTARLTGDAVTPKSIYLRRREFMIGLGAIAATGAASSAFADPLEA) constitute a signal peptide (tat-type signal). Mo-molybdopterin-binding positions include asparagine 75, 78–79 (YE), cysteine 133, asparagine 218, arginine 223, and 234–236 (GIK).

This sequence belongs to the MsrP family. As to quaternary structure, heterodimer of a catalytic subunit (MsrP) and a heme-binding subunit (MsrQ). It depends on Mo-molybdopterin as a cofactor. Predicted to be exported by the Tat system. The position of the signal peptide cleavage has not been experimentally proven.

The protein localises to the periplasm. The enzyme catalyses L-methionyl-[protein] + a quinone + H2O = L-methionyl-(S)-S-oxide-[protein] + a quinol. It carries out the reaction L-methionyl-[protein] + a quinone + H2O = L-methionyl-(R)-S-oxide-[protein] + a quinol. Functionally, part of the MsrPQ system that repairs oxidized periplasmic proteins containing methionine sulfoxide residues (Met-O), using respiratory chain electrons. Thus protects these proteins from oxidative-stress damage caused by reactive species of oxygen and chlorine generated by the host defense mechanisms. MsrPQ is essential for the maintenance of envelope integrity under bleach stress, rescuing a wide series of structurally unrelated periplasmic proteins from methionine oxidation. The catalytic subunit MsrP is non-stereospecific, being able to reduce both (R-) and (S-) diastereoisomers of methionine sulfoxide. This chain is Protein-methionine-sulfoxide reductase catalytic subunit MsrP, found in Brucella melitensis biotype 1 (strain ATCC 23456 / CCUG 17765 / NCTC 10094 / 16M).